The chain runs to 101 residues: Small ribosomal subunit protein uS14 (101 aa).

Belongs to the universal ribosomal protein uS14 family. As to quaternary structure, part of the 30S ribosomal subunit. Contacts proteins S3 and S10.

Functionally, binds 16S rRNA, required for the assembly of 30S particles and may also be responsible for determining the conformation of the 16S rRNA at the A site. The chain is Small ribosomal subunit protein uS14 from Pseudoalteromonas translucida (strain TAC 125).